A 115-amino-acid polypeptide reads, in one-letter code: Large ribosomal subunit protein bL19 (115 aa).

The protein belongs to the bacterial ribosomal protein bL19 family.

This protein is located at the 30S-50S ribosomal subunit interface and may play a role in the structure and function of the aminoacyl-tRNA binding site. In Pectobacterium atrosepticum (strain SCRI 1043 / ATCC BAA-672) (Erwinia carotovora subsp. atroseptica), this protein is Large ribosomal subunit protein bL19.